Consider the following 124-residue polypeptide: uncharacterized protein (124 aa).

A signal peptide spans 1–18; sequence MHIIKTLISVGVAFSLSA. Residue C19 is the site of N-palmitoyl cysteine attachment. C19 is lipidated: S-diacylglycerol cysteine.

The protein resides in the cell membrane. This is an uncharacterized protein from Pasteurella multocida (strain Pm70).